The chain runs to 419 residues: Ribosome biogenesis protein WDR12 homolog (419 aa).

The segment at 10–91 (VQVHLKTKQE…EDAIDIEYVE (82 aa)) is ubiquitin-like (UBL) domain. WD repeat units follow at residues 103 to 140 (LHDDWVSAVKACGKWILTGCYDNTINIWTNKGKHKLTI), 142 to 184 (GHTA…NAVE), 191 to 230 (GHERGVDSVCVSPDAQRFATGSWDTMLKIWSAGLDDTSEG), 249 to 287 (GHRESISAVQWMDATTLVTGSWDHTLKVWDLQLEGIKTE), 289 to 328 (STNKSIFDASYSKLNRLIVTASADKNLRLYDARTNQGSVV), 334 to 374 (GHNA…APLY), and 378 to 416 (GHGEKVLDIDWSNPKYIVSGGADNTVRVFKSGKATIENM).

This sequence belongs to the WD repeat WDR12/YTM1 family.

The protein resides in the nucleus. The protein localises to the nucleolus. Its subcellular location is the nucleoplasm. In terms of biological role, required for maturation of ribosomal RNAs and formation of the large ribosomal subunit. The chain is Ribosome biogenesis protein WDR12 homolog from Drosophila virilis (Fruit fly).